Reading from the N-terminus, the 436-residue chain is Testican-3 (436 aa).

The N-terminal stretch at 1-22 is a signal peptide; sequence MLKVSALLCVCAAAWCSQTLAA. 8 cysteine pairs are disulfide-bonded: Cys90/Cys101, Cys95/Cys111, Cys139/Cys169, Cys142/Cys162, Cys151/Cys183, Cys317/Cys341, Cys352/Cys359, and Cys361/Cys380. Positions 133–185 constitute a Kazal-like domain; the sequence is GLPSSTCKPCPIAYASPVCGSDGHSYSSQCKLEYQACVLGKQISIKCEGRCPC. In terms of domain architecture, Thyroglobulin type-1 spans 314–380; that stretch reads DPPCHTELSN…GSRINGVADC (67 aa). Ser387 and Ser392 each carry an O-linked (Xyl...) (glycosaminoglycan) serine glycan. Residues 393–436 are disordered; sequence GDFREWTDDEGEEDDIMNDKDDIEDDDEDEGDDDDDGDVHDGYI. The span at 399-430 shows a compositional bias: acidic residues; the sequence is TDDEGEEDDIMNDKDDIEDDDEDEGDDDDDGD.

Post-translationally, contains chondroitin sulfate and heparan sulfate O-linked oligosaccharides. Expressed in brain.

The protein resides in the secreted. Its subcellular location is the extracellular space. The protein localises to the extracellular matrix. Functionally, may participate in diverse steps of neurogenesis. Inhibits the processing of pro-matrix metalloproteinase 2 (MMP-2) by MT1-MMP and MT3-MMP. May interfere with tumor invasion. This chain is Testican-3 (Spock3), found in Mus musculus (Mouse).